Consider the following 431-residue polypeptide: uncharacterized protein (431 aa).

Disordered regions lie at residues 1-37 and 102-132; these read MFWRRLRPGAQDLAPKGLPGDGDFRRSSDPRLPKLTP and PPPLLSAGASRESAPRQPGPGERERPRRRVA. A compositionally biased stretch (basic and acidic residues) spans 22 to 32; the sequence is GDFRRSSDPRL. The span at 106-121 shows a compositional bias: low complexity; the sequence is LSAGASRESAPRQPGP. Over residues 122–132 the composition is skewed to basic and acidic residues; sequence GERERPRRRVA.

Its subcellular location is the cytoplasm. This is an uncharacterized protein from Homo sapiens (Human).